A 283-amino-acid chain; its full sequence is uncharacterized protein (283 aa).

This is an uncharacterized protein from Methanocaldococcus jannaschii (strain ATCC 43067 / DSM 2661 / JAL-1 / JCM 10045 / NBRC 100440) (Methanococcus jannaschii).